A 297-amino-acid polypeptide reads, in one-letter code: Phospholipid scramblase 2 (297 aa).

Residues 1-72 (MRSWNSLFCL…NQPGRPEGVP (72 aa)) are proline-rich domain (PRD). Topologically, residues 1–276 (MRSWNSLFCL…IQFPRDLDVK (276 aa)) are cytoplasmic. T149 carries the phosphothreonine; by PKC modification. Residues C172, C173, C174, C176, and C177 are each lipidated (S-palmitoyl cysteine). The chain crosses the membrane as a helical span at residues 277 to 293 (MKAVMIGACFLIDYMFF). At 294–297 (ERTR) the chain is on the extracellular side.

The protein belongs to the phospholipid scramblase family. It depends on Ca(2+) as a cofactor. As to expression, expression of isoform 1 seems restricted to testis.

It localises to the membrane. It is found in the nucleus. The enzyme catalyses a 1,2-diacyl-sn-glycero-3-phosphocholine(in) = a 1,2-diacyl-sn-glycero-3-phosphocholine(out). May catalyze calcium-induced ATP-independent rapid bidirectional and non-specific movement of phospholipids (lipid scrambling or lipid flip-flop) between the inner and outer leaflet of the plasma membrane. Functionally, has no phospholipid scramblase activity, due to the lack of a N-terminal proline-rich domain. The chain is Phospholipid scramblase 2 from Homo sapiens (Human).